A 401-amino-acid chain; its full sequence is UPF0242 protein CCA_01002 (401 aa).

Belongs to the UPF0242 family.

In Chlamydia caviae (strain ATCC VR-813 / DSM 19441 / 03DC25 / GPIC) (Chlamydophila caviae), this protein is UPF0242 protein CCA_01002.